Reading from the N-terminus, the 350-residue chain is Flap endonuclease 1 (350 aa).

The tract at residues Met1 to Lys101 is N-domain. Residues Asp30, Asp83, Glu155, Glu157, Asp176, Asp178, and Asp239 each coordinate Mg(2+). The I-domain stretch occupies residues Glu119 to Gly261. The interaction with PCNA stretch occupies residues Arg341–Phe349.

This sequence belongs to the XPG/RAD2 endonuclease family. FEN1 subfamily. As to quaternary structure, interacts with PCNA. PCNA stimulates the nuclease activity without altering cleavage specificity. Mg(2+) is required as a cofactor.

Structure-specific nuclease with 5'-flap endonuclease and 5'-3' exonuclease activities involved in DNA replication and repair. During DNA replication, cleaves the 5'-overhanging flap structure that is generated by displacement synthesis when DNA polymerase encounters the 5'-end of a downstream Okazaki fragment. Binds the unpaired 3'-DNA end and kinks the DNA to facilitate 5' cleavage specificity. Cleaves one nucleotide into the double-stranded DNA from the junction in flap DNA, leaving a nick for ligation. Also involved in the base excision repair (BER) pathway. Acts as a genome stabilization factor that prevents flaps from equilibrating into structures that lead to duplications and deletions. Also possesses 5'-3' exonuclease activity on nicked or gapped double-stranded DNA. The protein is Flap endonuclease 1 of Aeropyrum pernix (strain ATCC 700893 / DSM 11879 / JCM 9820 / NBRC 100138 / K1).